A 256-amino-acid chain; its full sequence is Nuclear shuttle protein (256 aa).

Residues 21 to 42 (HSTGKRSRNVSRIDFKRRSSKY) carry the Bipartite nuclear localization signal motif. The short motif at 81–96 (SLGKTEPSRSRSYIKL) is the Nuclear localization signal element. The tract at residues 150 to 187 (ELFGARIHSHGNLAVSSALKDRFYIRHVFKRVISVEKD) is interaction with Arabidopsis thaliana NSI protein.

This sequence belongs to the begomovirus nuclear shuttle protein family. In terms of assembly, binds to single-stranded and double-stranded viral DNA. Interacts with the host nuclear shuttle interacting (NSI) protein. This interaction may allow NSP to recruit NSI monomers to the viral genome and thus regulate nuclear export of viral genome by NSP.

It is found in the host nucleus. It localises to the host cytoplasm. Its subcellular location is the host cell membrane. Functionally, binds to the genomic viral ssDNA, shuttles it into and out of the cell nucleus. Begomoviruses use 2 proteins to transport their DNA from cell to cell. The nuclear shuttle protein (NSP) shuttles it between nucleus and cytoplasm and the movement protein (MP) probably transports the DNA-NSP complex to the cell periphery and facilitates movement across the cell wall. This is Nuclear shuttle protein from Solanum lycopersicum (Tomato).